The sequence spans 268 residues: Lipase 1 (268 aa).

The signal sequence occupies residues 1 to 29 (MRRFRLVGFLSSLVLAAGAALTGAATAQA). Ser-44 (nucleophile) is an active-site residue. Cystine bridges form between Cys-61–Cys-86, Cys-127–Cys-135, and Cys-185–Cys-231. His-250 is a catalytic residue.

Belongs to the 'GDSL' lipolytic enzyme family. Monomer.

Its subcellular location is the secreted. The enzyme catalyses a triacylglycerol + H2O = a diacylglycerol + a fatty acid + H(+). Strongly inhibited by Ag(+). The cations Ca(2+), Mg(2+), Co(2+) and Cu(2+) do not significantly reduce the lipolytic activity of SCO1725. Is also inhibited by DTT in vitro, but not by EDTA or by the reagent masking SH-groups, p-hydroxymercuribenzoate (pHMB). Is resistant to PMSF inhibition, except in the presence of Ca(2+). Is also strongly inhibited by 3,4-dichloroisocoumarin (DCI), another inhibitor of serine hydrolases. Addition of tetrahydrofuran and 1,4-dioxane significantly increases (2- and 4- fold, respectively) hydrolytic activity of lipase towards p-nitrophenyl caprylate. Catalyzes the hydrolysis of fatty acid esters with a preference for mid-length acyl chain (C10-C16). Is able to hydrolyze the triacylglycerol triolein and mixed triacylglycerols from a wide range of natural oils; better activity is obtained with corn-, wheat germ- and olive oil that have higher content of linoleic and/or oleic acid (C18:2; C18:1, cis). Tween detergents are also substrates for this enzyme. Displays arylesterase activity towards p-nitrophenyl alkanoate esters and alpha- and beta-naphthyl esters. This chain is Lipase 1, found in Streptomyces coelicolor (strain ATCC BAA-471 / A3(2) / M145).